The chain runs to 221 residues: uncharacterized protein (221 aa).

A compositionally biased stretch (basic residues) spans 1 to 11; sequence MGEKSRRKGPA. 2 disordered regions span residues 1–23 and 139–169; these read MGEK…GRTC and SNFQ…SAPE. Composition is skewed to basic and acidic residues over residues 13–23 and 155–168; these read RHADGKLGRTC and DKRS…RSAP.

This is an uncharacterized protein from Homo sapiens (Human).